The chain runs to 372 residues: Chaperone protein DnaJ (372 aa).

One can recognise a J domain in the interval 5-69 (DYYEVLGVSK…DKRKQYDQFG (65 aa)). Residues 139–221 (GVDKIIELDL…CKGKGKYLER (83 aa)) form a CR-type zinc finger. C152, C155, C169, C172, C195, C198, C209, and C212 together coordinate Zn(2+). 4 CXXCXGXG motif repeats span residues 152–159 (CSACFGSG), 169–176 (CNNCHGTG), 195–202 (CNVCNGAG), and 209–216 (CKNCKGKG).

This sequence belongs to the DnaJ family. As to quaternary structure, homodimer. The cofactor is Zn(2+).

It localises to the cytoplasm. Its function is as follows. Participates actively in the response to hyperosmotic and heat shock by preventing the aggregation of stress-denatured proteins and by disaggregating proteins, also in an autonomous, DnaK-independent fashion. Unfolded proteins bind initially to DnaJ; upon interaction with the DnaJ-bound protein, DnaK hydrolyzes its bound ATP, resulting in the formation of a stable complex. GrpE releases ADP from DnaK; ATP binding to DnaK triggers the release of the substrate protein, thus completing the reaction cycle. Several rounds of ATP-dependent interactions between DnaJ, DnaK and GrpE are required for fully efficient folding. Also involved, together with DnaK and GrpE, in the DNA replication of plasmids through activation of initiation proteins. The chain is Chaperone protein DnaJ from Mycoplasma capricolum subsp. capricolum (strain California kid / ATCC 27343 / NCTC 10154).